We begin with the raw amino-acid sequence, 146 residues long: D-aminoacyl-tRNA deacylase (146 aa).

The Gly-cisPro motif, important for rejection of L-amino acids motif lies at 137-138; that stretch reads GP.

This sequence belongs to the DTD family. In terms of assembly, homodimer.

Its subcellular location is the cytoplasm. The enzyme catalyses glycyl-tRNA(Ala) + H2O = tRNA(Ala) + glycine + H(+). It catalyses the reaction a D-aminoacyl-tRNA + H2O = a tRNA + a D-alpha-amino acid + H(+). An aminoacyl-tRNA editing enzyme that deacylates mischarged D-aminoacyl-tRNAs. Also deacylates mischarged glycyl-tRNA(Ala), protecting cells against glycine mischarging by AlaRS. Acts via tRNA-based rather than protein-based catalysis; rejects L-amino acids rather than detecting D-amino acids in the active site. By recycling D-aminoacyl-tRNA to D-amino acids and free tRNA molecules, this enzyme counteracts the toxicity associated with the formation of D-aminoacyl-tRNA entities in vivo and helps enforce protein L-homochirality. This is D-aminoacyl-tRNA deacylase from Halalkalibacterium halodurans (strain ATCC BAA-125 / DSM 18197 / FERM 7344 / JCM 9153 / C-125) (Bacillus halodurans).